The primary structure comprises 589 residues: Sentrin-specific protease 2 (589 aa).

Positions 28-31 match the Nuclear localization signal motif; sequence KRRR. Ser32 is subject to Phosphoserine. The Nuclear localization signal motif lies at 46–51; sequence PAKRPR. The disordered stretch occupies residues 155–176; sequence SEGCNRRPGGRRHSKGNPESSL. The short motif at 317-332 is the Nuclear export signal element; sequence LEPDLSEEVSARLRLG. Residues Ser333 and Ser344 each carry the phosphoserine modification. The interval 396-560 is protease; that stretch reads RITRGDIQTL…FTCKYADYIS (165 aa). Catalysis depends on residues His478 and Asp495. Cys548 (nucleophile) is an active-site residue.

This sequence belongs to the peptidase C48 family. As to quaternary structure, binds to SUMO2 and SUMO3. Interacts with the C-terminal domain of NUP153 via its N-terminus. Interacts with MTA1. In terms of processing, polyubiquitinated; which leads to proteasomal degradation.

It is found in the nucleus. The protein localises to the nuclear pore complex. The protein resides in the nucleus membrane. It localises to the cytoplasm. Its function is as follows. Protease that catalyzes two essential functions in the SUMO pathway. The first is the hydrolysis of an alpha-linked peptide bond at the C-terminal end of the small ubiquitin-like modifier (SUMO) propeptides, SUMO1, SUMO2 and SUMO3 leading to the mature form of the proteins. The second is the deconjugation of SUMO1, SUMO2 and SUMO3 from targeted proteins, by cleaving an epsilon-linked peptide bond between the C-terminal glycine of the mature SUMO and the lysine epsilon-amino group of the target protein. May down-regulate CTNNB1 levels and thereby modulate the Wnt pathway. Deconjugates SUMO2 from MTA1. Plays a dynamic role in adipogenesis by desumoylating and promoting the stabilization of CEBPB. Acts as a regulator of the cGAS-STING pathway by catalyzing desumoylation of CGAS and STING1 during the late phase of viral infection. The polypeptide is Sentrin-specific protease 2 (Homo sapiens (Human)).